We begin with the raw amino-acid sequence, 1028 residues long: RNA cytidine acetyltransferase 2 (1028 aa).

ATP contacts are provided by residues 286–295 and Arg-458; that span reads GRGKSAALGL. The region spanning 546–729 is the N-acetyltransferase domain; that stretch reads VLLGPVDESQ…FAPFYVSQIP (184 aa). Residues 617 to 619, 624 to 630, and Lys-717 contribute to the acetyl-CoA site; these read IAV and MKMGYGS. The interval 982–1028 is disordered; it reads SGIISVKSTKSENENGFDKSTKKRSSDKRSSSSSKSKSSKKRKSLKE. Basic and acidic residues predominate over residues 990-1001; it reads TKSENENGFDKS. Over residues 1018–1028 the composition is skewed to basic residues; it reads KSSKKRKSLKE.

This sequence belongs to the RNA cytidine acetyltransferase family. NAT10 subfamily.

The protein resides in the nucleus. It is found in the nucleolus. The catalysed reaction is a cytidine in 18S rRNA + acetyl-CoA + ATP + H2O = an N(4)-acetylcytidine in 18S rRNA + ADP + phosphate + CoA + H(+). It carries out the reaction a cytidine in tRNA + acetyl-CoA + ATP + H2O = an N(4)-acetylcytidine in tRNA + ADP + phosphate + CoA + H(+). RNA cytidine acetyltransferase with specificity toward both 18S rRNA and tRNAs. Catalyzes the formation of N(4)-acetylcytidine (ac4C) in 18S rRNA. Required for early nucleolar cleavages of precursor rRNA at sites A0, A1 and A2 during 18S rRNA synthesis. Catalyzes the formation of ac4C in serine and leucine tRNAs. Requires a tRNA-binding adapter protein for full tRNA acetyltransferase activity but not for 18S rRNA acetylation. The polypeptide is RNA cytidine acetyltransferase 2 (Arabidopsis thaliana (Mouse-ear cress)).